The primary structure comprises 506 residues: Cytochrome P450 4B1 (506 aa).

Glutamate 310 serves as a coordination point for heme. At serine 431 the chain carries Phosphoserine. Cysteine 448 is a binding site for heme.

The protein belongs to the cytochrome P450 family. Requires heme as cofactor.

Its subcellular location is the endoplasmic reticulum membrane. The protein resides in the microsome membrane. It carries out the reaction an organic molecule + reduced [NADPH--hemoprotein reductase] + O2 = an alcohol + oxidized [NADPH--hemoprotein reductase] + H2O + H(+). Its function is as follows. Cytochromes P450 are a group of heme-thiolate monooxygenases. In liver microsomes, this enzyme is involved in an NADPH-dependent electron transport pathway. It oxidizes a variety of structurally unrelated compounds, including steroids, fatty acids, and xenobiotics. The sequence is that of Cytochrome P450 4B1 (CYP4B1) from Oryctolagus cuniculus (Rabbit).